The following is a 116-amino-acid chain: Beta-2-microglobulin (116 aa).

A signal peptide spans 1–19 (MRALITFALLCLLYITVQG). An Ig-like C1-type domain is found at 24-111 (PKVHVYSHFP…RHMKETKKFS (88 aa)). Cys-44 and Cys-99 are joined by a disulfide.

The protein belongs to the beta-2-microglobulin family. In terms of assembly, heterodimer of an alpha chain and a beta chain. Beta-2-microglobulin is the beta-chain of major histocompatibility complex class I molecules.

The protein resides in the secreted. Its function is as follows. Component of the class I major histocompatibility complex (MHC). Involved in the presentation of peptide antigens to the immune system. This chain is Beta-2-microglobulin (b2m), found in Danio rerio (Zebrafish).